The following is a 295-amino-acid chain: Pyridoxal 5'-phosphate synthase subunit PdxS (295 aa).

Residue aspartate 25 coordinates D-ribose 5-phosphate. The Schiff-base intermediate with D-ribose 5-phosphate role is filled by lysine 82. Glycine 154 contacts D-ribose 5-phosphate. Residue arginine 166 participates in D-glyceraldehyde 3-phosphate binding. D-ribose 5-phosphate contacts are provided by residues glycine 215 and glycine 236–serine 237.

This sequence belongs to the PdxS/SNZ family. As to quaternary structure, in the presence of PdxT, forms a dodecamer of heterodimers.

The enzyme catalyses aldehydo-D-ribose 5-phosphate + D-glyceraldehyde 3-phosphate + L-glutamine = pyridoxal 5'-phosphate + L-glutamate + phosphate + 3 H2O + H(+). It participates in cofactor biosynthesis; pyridoxal 5'-phosphate biosynthesis. Its function is as follows. Catalyzes the formation of pyridoxal 5'-phosphate from ribose 5-phosphate (RBP), glyceraldehyde 3-phosphate (G3P) and ammonia. The ammonia is provided by the PdxT subunit. Can also use ribulose 5-phosphate and dihydroxyacetone phosphate as substrates, resulting from enzyme-catalyzed isomerization of RBP and G3P, respectively. The polypeptide is Pyridoxal 5'-phosphate synthase subunit PdxS (Staphylococcus aureus (strain Mu3 / ATCC 700698)).